We begin with the raw amino-acid sequence, 298 residues long: MGRAPCCDKANVKRGPWSPEEDAKLKDYIEKQGTGGNWIALPHKAGLRRCGKSCRLRWLNYLRPNIRHGDFTEEEDNIIYSLFASIGSRWSVIAAHLQGRTDNDIKNYWNTKLKKKLIATMAPPPHHHLAIATSSSSASPSSSSHYNMINSLLPYNPSTNQLLTPHQGIMMTMMGQQQQLFYQEDMGNLVNSPNRNNLIMSHQEDNQEQSTNKGIMLLSDVRSGSSTTSTVTRVKMEHRDHDDHHHHHEEDERSMTSVVMEDYGMEEIKQLISSSCTSSNNSLWFDENKTEDKFMLYY.

2 HTH myb-type domains span residues 9–62 (KANV…LNYL) and 63–117 (RPNI…KKKL). DNA-binding regions (H-T-H motif) lie at residues 38 to 62 (WIALPHKAGLRRCGKSCRLRWLNYL) and 90 to 113 (WSVIAAHLQGRTDNDIKNYWNTKL).

As to expression, ubiquitous, with higher levels in roots, flowers, and shoot tips. Found in all cells of the shoot tips.

It is found in the nucleus. Functionally, transcription activator. Positively regulates axillary meristems (AMs) formation and development, especially during inflorescence. The protein is Transcription factor RAX2 (RAX2) of Arabidopsis thaliana (Mouse-ear cress).